Here is an 85-residue protein sequence, read N- to C-terminus: Cell division topological specificity factor (85 aa).

Belongs to the MinE family.

Prevents the cell division inhibition by proteins MinC and MinD at internal division sites while permitting inhibition at polar sites. This ensures cell division at the proper site by restricting the formation of a division septum at the midpoint of the long axis of the cell. The sequence is that of Cell division topological specificity factor from Dechloromonas aromatica (strain RCB).